Reading from the N-terminus, the 356-residue chain is Epoxide hydrolase B (356 aa).

Residues 28 to 129 (PLVVLLHGFP…RCAGVVGISV (102 aa)) form the AB hydrolase-1 domain. D104 functions as the Nucleophile in the catalytic mechanism. Catalysis depends on H333, which acts as the Proton acceptor.

The protein belongs to the AB hydrolase superfamily. Epoxide hydrolase family. Homodimer.

The catalysed reaction is an epoxide + H2O = an ethanediol. In terms of biological role, could be involved in detoxification of extraneous host-cell epoxides. Catalyzes the hydrolysis of small aromatic epoxide-containing substrates such as trans-1,3-diphenylpropene oxide, trans and cis-stilbene oxide, and terpenoid epoxide. This is Epoxide hydrolase B from Mycobacterium tuberculosis (strain CDC 1551 / Oshkosh).